A 232-amino-acid polypeptide reads, in one-letter code: Ribose-5-phosphate isomerase A (232 aa).

Residues Thr-29–Thr-32, Asp-84–Asp-87, and Lys-97–Gly-100 each bind substrate. Glu-106 acts as the Proton acceptor in catalysis. Lys-124 provides a ligand contact to substrate.

The protein belongs to the ribose 5-phosphate isomerase family. As to quaternary structure, homodimer.

The catalysed reaction is aldehydo-D-ribose 5-phosphate = D-ribulose 5-phosphate. It functions in the pathway carbohydrate degradation; pentose phosphate pathway; D-ribose 5-phosphate from D-ribulose 5-phosphate (non-oxidative stage): step 1/1. In terms of biological role, catalyzes the reversible conversion of ribose-5-phosphate to ribulose 5-phosphate. This chain is Ribose-5-phosphate isomerase A, found in Brucella suis biovar 1 (strain 1330).